The sequence spans 322 residues: Protein-L-isoaspartate O-methyltransferase (322 aa).

Residues 1–101 (MSGERAKRFP…AKQGDRSAAP (101 aa)) form a disordered region. Over residues 14 to 29 (EDLKREPRKPEGRVAE) the composition is skewed to basic and acidic residues. 2 stretches are compositionally biased toward low complexity: residues 33–51 (AGDA…PAAA) and 76–91 (HAPA…PQGG). Serine 170 is an active-site residue.

The protein belongs to the methyltransferase superfamily. L-isoaspartyl/D-aspartyl protein methyltransferase family.

The protein resides in the cytoplasm. It carries out the reaction [protein]-L-isoaspartate + S-adenosyl-L-methionine = [protein]-L-isoaspartate alpha-methyl ester + S-adenosyl-L-homocysteine. Functionally, catalyzes the methyl esterification of L-isoaspartyl residues in peptides and proteins that result from spontaneous decomposition of normal L-aspartyl and L-asparaginyl residues. It plays a role in the repair and/or degradation of damaged proteins. The sequence is that of Protein-L-isoaspartate O-methyltransferase from Burkholderia pseudomallei (strain 1710b).